The chain runs to 184 residues: Large ribosomal subunit protein uL18 (184 aa).

It belongs to the universal ribosomal protein uL18 family. In terms of assembly, part of the 50S ribosomal subunit. Contacts the 5S and 23S rRNAs.

Its function is as follows. This is one of the proteins that bind and probably mediate the attachment of the 5S RNA into the large ribosomal subunit, where it forms part of the central protuberance. In Natronomonas pharaonis (strain ATCC 35678 / DSM 2160 / CIP 103997 / JCM 8858 / NBRC 14720 / NCIMB 2260 / Gabara) (Halobacterium pharaonis), this protein is Large ribosomal subunit protein uL18.